A 92-amino-acid polypeptide reads, in one-letter code: Small ribosomal subunit protein uS19c (92 aa).

This sequence belongs to the universal ribosomal protein uS19 family.

The protein localises to the plastid. The protein resides in the chloroplast. Protein S19 forms a complex with S13 that binds strongly to the 16S ribosomal RNA. This Pinus thunbergii (Japanese black pine) protein is Small ribosomal subunit protein uS19c (rps19).